The primary structure comprises 370 residues: Metalloproteinase (370 aa).

Positions 1 to 15 (MYLAYIFFLFATVSA) are cleaved as a signal peptide. Positions 170 to 370 (IVIEVLLVTD…DNYGKIFRMF (201 aa)) constitute a Peptidase M12B domain. Asn226 is a glycosylation site (N-linked (GalNAc...) asparagine). Zn(2+) is bound at residue His320. Residue Glu321 is part of the active site. The Zn(2+) site is built by His324 and His330.

Belongs to the venom metalloproteinase (M12B) family. As to expression, expressed by the venom gland.

The protein resides in the secreted. In terms of biological role, metalloprotease that may disrupt the cell matrix and the process of clotting blood or hemolymph. In Tityus obscurus (Amazonian scorpion), this protein is Metalloproteinase.